The sequence spans 53 residues: Mannose/glucose-specific lectin alpha chain (53 aa).

Belongs to the leguminous lectin family. As to quaternary structure, heterodimer of an alpha and a beta chain.

Its function is as follows. This lectin specifically binds mannose and glucose. The sequence is that of Mannose/glucose-specific lectin alpha chain from Vicia cracca (Bird vetch).